Here is a 543-residue protein sequence, read N- to C-terminus: Protein GPR108 (543 aa).

The signal sequence occupies residues 1-32 (MAVSERRGLGRGSPAEWGQRLLLVLLLGGCSG). 2 N-linked (GlcNAc...) asparagine glycosylation sites follow: asparagine 57 and asparagine 109. The segment at 149-186 (SKPGLPKPQATVPRKVDGGGTSAASKPKSTPAVIQGPS) is disordered. Asparagine 200, asparagine 204, and asparagine 228 each carry an N-linked (GlcNAc...) asparagine glycan. Transmembrane regions (helical) follow at residues 263–283 (LYMV…SILC), 292–312 (IHWL…FHSI), 336–356 (LLKG…WAFI), 367–387 (VFGI…IIES), 401–421 (ILFL…VWSI), 449–469 (VMVI…QVAV), and 473–493 (WQWL…VLTG). Asparagine 534 is a glycosylation site (N-linked (GlcNAc...) asparagine).

The protein belongs to the LU7TM family.

Its subcellular location is the golgi apparatus. The protein localises to the cis-Golgi network membrane. The protein resides in the trans-Golgi network membrane. It localises to the golgi apparatus membrane. May play a role in intracellular immune modulation by activating NF-kappaB response and attenuating Toll-like-receptor response. Its function is as follows. (Microbial infection) Plays an essential function in adeno-associated virus (AAV) transduction across multiple serotypes except AAV5. May play a critical role in mediating the endosomal virus escape or in the AAV virions trafficking from endosomes to the nucleus. In Homo sapiens (Human), this protein is Protein GPR108.